A 288-amino-acid polypeptide reads, in one-letter code: Programmed cell death protein 1 (288 aa).

Positions 1–24 (MQIPQAPWPVVWAVLQLGWRPGWF) are cleaved as a signal peptide. Residues 25–34 (LDSPDRPWNP) form a nivolumab binding region. Topologically, residues 25 to 170 (LDSPDRPWNP…RPAGQFQTLV (146 aa)) are extracellular. An Ig-like V-type domain is found at 35–145 (PTFSPALLVV…ESLRAELRVT (111 aa)). Residues asparagine 49, asparagine 58, asparagine 74, and asparagine 116 are each glycosylated (N-linked (GlcNAc...) asparagine). A disulfide bridge connects residues cysteine 54 and cysteine 123. The segment at 70-77 (MSPSNQTD) is interaction with CD274/PDCD1L1. The tract at residues 74–99 (NQTDKLAAFPEDRSQPGQDCRFRVTQ) is pembrolizumab binding. The helical transmembrane segment at 171–191 (VGVVGGLLGSLVLLVWVLAVI) threads the bilayer. The Cytoplasmic portion of the chain corresponds to 192 to 288 (CSRAARGTIG…PEDGHCSWPL (97 aa)). The ITIM motif signature appears at 221–226 (VDYGEL). At tyrosine 223 the chain carries Phosphotyrosine. Lysine 233 participates in a covalent cross-link: Glycyl lysine isopeptide (Lys-Gly) (interchain with G-Cter in ubiquitin). Residue threonine 234 is modified to Phosphothreonine; by MAPK3. Positions 247 to 251 (EYATI) match the ITSM motif motif. Residue tyrosine 248 is modified to Phosphotyrosine. Positions 254–288 (PSGMGTSSPARRGSADGPRSAQPLRPEDGHCSWPL) are disordered. Basic and acidic residues predominate over residues 278-288 (RPEDGHCSWPL).

In terms of assembly, monomer. Interacts with CD274/PDCD1L1. Interacts with CD273/PDCD1LG2. Interacts with FBXO38; leading to ubiquitination and degradation of PDCD1 by the proteasome. In terms of processing, ubiquitinated at Lys-233 by the SCF(FBXO38) complex, leading to its proteasomal degradation. Ubiquitinated via 'Lys-48'-linked polyubiquitin chains. Deubiquitinated and thus stabilized by USP5. Post-translationally, tyrosine phosphorylated at Tyr-223 (within ITIM motif) and Tyr-248 (ITSM motif) upon ligand binding. Phosphorylation at Tyr-248 promotes the recruitment of the protein tyrosine phosphatase PTPN11/SHP-2 that mediates dephosphorylation of key TCR proximal signaling molecules, such as ZAP70, PRKCQ/PKCtheta and CD247/CD3zeta. Phosphorylation at Thr-234 promotes the recruitment of the deubiquitinase USP5. N-glycosylation at Asn-58 contains at least two N-acetylglucosamine units and one fucose. N-glycosylation does not affect binding to nivolumab drug.

It is found in the cell membrane. Inhibited by pembrolizumab (also named MK-3475 or lambrolizumab), a monoclonal antibody that prevents the interaction with CD274/PDCD1L1. Inhibited by nivolumab (also named ONO-4538, BMS-936558 or Opdivo), a monoclonal antibody that prevents the interaction with CD274/PDCD1L1. The interaction with nivolumab is not dependent on glycosylation and depends on a loop at the N-terminus (N-terminal loop, corresponding to residues 25-34). Targeting the interaction between PDCD1 and CD274/PDCD1L1 with pembrolizumab and nivolumab antibodies has demonstrated great promise as a strategy for controlling and eradicating cancer. Pembrolizumab and nivolumab are used for treatment of patients with advanced melanoma. These antibodies are also effective against other cancers, such as non-small cell lung cancer, renal cell carcinoma, bladder cancer and Hodgkin's lymphoma. Inhibitory receptor on antigen activated T-cells that plays a critical role in induction and maintenance of immune tolerance to self. Delivers inhibitory signals upon binding to ligands CD274/PDCD1L1 and CD273/PDCD1LG2. Following T-cell receptor (TCR) engagement, PDCD1 associates with CD3-TCR in the immunological synapse and directly inhibits T-cell activation. Suppresses T-cell activation through the recruitment of PTPN11/SHP-2: following ligand-binding, PDCD1 is phosphorylated within the ITSM motif, leading to the recruitment of the protein tyrosine phosphatase PTPN11/SHP-2 that mediates dephosphorylation of key TCR proximal signaling molecules, such as ZAP70, PRKCQ/PKCtheta and CD247/CD3zeta. In terms of biological role, the PDCD1-mediated inhibitory pathway is exploited by tumors to attenuate anti-tumor immunity and escape destruction by the immune system, thereby facilitating tumor survival. The interaction with CD274/PDCD1L1 inhibits cytotoxic T lymphocytes (CTLs) effector function. The blockage of the PDCD1-mediated pathway results in the reversal of the exhausted T-cell phenotype and the normalization of the anti-tumor response, providing a rationale for cancer immunotherapy. This chain is Programmed cell death protein 1, found in Homo sapiens (Human).